Consider the following 453-residue polypeptide: Ribosomal protein uS12 methylthiotransferase RimO (453 aa).

Residues 5 to 120 (PKVGFVSLGC…VMQAVHSHLP (116 aa)) enclose the MTTase N-terminal domain. [4Fe-4S] cluster-binding residues include Cys-14, Cys-50, Cys-79, Cys-151, Cys-155, and Cys-158. The Radical SAM core domain occupies 137–382 (LTPRHYAYLK…MEVAEEVSAN (246 aa)). Residues 385 to 453 (QRKVGKTLKV…ADGHDLWGEV (69 aa)) enclose the TRAM domain.

The protein belongs to the methylthiotransferase family. RimO subfamily. [4Fe-4S] cluster serves as cofactor.

The protein localises to the cytoplasm. It catalyses the reaction L-aspartate(89)-[ribosomal protein uS12]-hydrogen + (sulfur carrier)-SH + AH2 + 2 S-adenosyl-L-methionine = 3-methylsulfanyl-L-aspartate(89)-[ribosomal protein uS12]-hydrogen + (sulfur carrier)-H + 5'-deoxyadenosine + L-methionine + A + S-adenosyl-L-homocysteine + 2 H(+). In terms of biological role, catalyzes the methylthiolation of an aspartic acid residue of ribosomal protein uS12. This chain is Ribosomal protein uS12 methylthiotransferase RimO, found in Burkholderia lata (strain ATCC 17760 / DSM 23089 / LMG 22485 / NCIMB 9086 / R18194 / 383).